Here is a 140-residue protein sequence, read N- to C-terminus: Iron sulfur cluster assembly protein 1 (140 aa).

The protein belongs to the NifU family. As to quaternary structure, component of the core Fe-S cluster (ISC) assembly machinery. Requires [2Fe-2S] cluster as cofactor.

It localises to the mitosome matrix. It participates in cofactor biosynthesis; iron-sulfur cluster biosynthesis. In terms of biological role, scaffold protein for the de novo synthesis of iron-sulfur (Fe-S) clusters within mitosomes, which is required for maturation of both [2Fe-2S] and [4Fe-4S] proteins. First, a [2Fe-2S] cluster is transiently assembled on the scaffold protein ISU1. In a second step, the cluster is released from ISU1, transferred to a glutaredoxin, followed by the formation of [2Fe-2S] proteins, the synthesis of [4Fe-4S] clusters and their target-specific insertion into the recipient apoproteins. Cluster assembly on ISU1 depends on the function of the cysteine desulfurase complex NFS1-ISD11, which serves as the sulfur donor for cluster synthesis, the iron-binding protein frataxin as the putative iron donor, and the electron transfer chain comprised of ferredoxin reductase and ferredoxin, which receive their electrons from NADH. The chain is Iron sulfur cluster assembly protein 1 (ISU1) from Encephalitozoon cuniculi (strain GB-M1) (Microsporidian parasite).